Consider the following 1065-residue polypeptide: Bifunctional cytochrome P450/NADPH--P450 reductase (1065 aa).

A cytochrome P450 region spans residues 1–479 (MEKKVSAIPQ…EDKLKNDEIK (479 aa)). Residue Cys405 participates in heme binding. Residues 480–1065 (QHVQKTPSII…RYGKDVWAGI (586 aa)) are NADPH--P450 reductase. Residues 496 to 635 (LLVLYGSDTG…QLEQWKQNMW (140 aa)) form the Flavodoxin-like domain. Residues 502–507 (SDTGVA), 549–552 (SYNG), 583–585 (CGD), and 591–593 (TYQ) each bind FMN. The region spanning 674–907 (YEAVYASILE…RTPQSNFELP (234 aa)) is the FAD-binding FR-type domain.

The protein in the N-terminal section; belongs to the cytochrome P450 family. Heme is required as a cofactor. Requires FAD as cofactor. The cofactor is FMN.

The catalysed reaction is 2 oxidized [cytochrome P450] + NADPH = 2 reduced [cytochrome P450] + NADP(+) + H(+). It carries out the reaction an organic molecule + reduced [NADPH--hemoprotein reductase] + O2 = an alcohol + oxidized [NADPH--hemoprotein reductase] + H2O + H(+). Functions as a fatty acid monooxygenase. Catalyzes hydroxylation of fatty acids at omega-1, omega-2 and omega-3 positions, yielding primarily omega-1 and omega-2 hydroxylated products. Metabolizes unsaturated and saturated fatty acids as well as N-acylamino acids. Has a preference for long-chain unsaturated fatty acids over saturated fatty acids. Shows activity toward saturated fatty acids with a chain length of 9-18 carbons with preference for longer fatty acids. Also displays a NADPH-dependent reductase activity in the C-terminal domain, which allows electron transfer from NADPH to the heme iron of the cytochrome P450 N-terminal domain. This Bacillus cereus (strain ATCC 14579 / DSM 31 / CCUG 7414 / JCM 2152 / NBRC 15305 / NCIMB 9373 / NCTC 2599 / NRRL B-3711) protein is Bifunctional cytochrome P450/NADPH--P450 reductase.